The primary structure comprises 581 residues: Peptidyl-prolyl cis-trans isomerase FKBP10 (581 aa).

The N-terminal stretch at 1 to 33 (MFLVGSSSHTLHRLRILPLLLLLQTLERGLGRA) is a signal peptide. PPIase FKBP-type domains lie at 61–149 (GDFV…LDVW), 173–261 (SDFV…LDVH), and 285–373 (GDFM…IDFH). 7 N-linked (GlcNAc...) asparagine glycosylation sites follow: Asn69, Asn181, Asn293, Asn309, Asn351, Asn392, and Asn406. Residues 398–485 (GDFIRYHYNC…LFEVELVSRE (88 aa)) form the PPIase FKBP-type 4 domain. EF-hand domains follow at residues 496 to 531 (WYQD…QVNE) and 541 to 576 (DPDK…DQER). Positions 509, 511, 513, 515, 520, 554, 556, 558, 560, and 565 each coordinate Ca(2+). A disordered region spans residues 533 to 581 (KGRLMPGQDPDKTISDMFQNQDRNQDGKITAEELKLKSDEDQERVHEEL). The span at 555 to 581 (RNQDGKITAEELKLKSDEDQERVHEEL) shows a compositional bias: basic and acidic residues. Residues 578–581 (HEEL) carry the Prevents secretion from ER motif.

In terms of processing, N-glycosylated. Phosphorylated. Expressed in aorta, brain, heart, kidney, lung, spleen and testis. Not detected in liver.

It is found in the endoplasmic reticulum lumen. It catalyses the reaction [protein]-peptidylproline (omega=180) = [protein]-peptidylproline (omega=0). Inhibited by both FK506 and rapamycin, but not by cyclosporin A. Its function is as follows. PPIases accelerate the folding of proteins during protein synthesis. The protein is Peptidyl-prolyl cis-trans isomerase FKBP10 (Fkbp10) of Mus musculus (Mouse).